The sequence spans 697 residues: Potassium-transporting ATPase ATP-binding subunit (697 aa).

4 consecutive transmembrane segments (helical) span residues 55-75 (PIMFVVEIGFIITLILSFLPS), 82-102 (GWFNITVSLILLFTVLFANFA), 245-265 (LTLIFLIVVVTLPIFTNYLGF), and 271-291 (VLVALLVCLIPTTIGGLLSAI). The 4-aspartylphosphate intermediate role is filled by D324. Residues D361, E365, 393–400 (FKAETRMS), and K412 contribute to the ATP site. Mg(2+) contacts are provided by D535 and D539. 3 helical membrane-spanning segments follow: residues 605–625 (FAIIPAMFTLAIPQMEALNIM), 633–653 (AILSALIFNAVIIPLLIPLAM), and 677–697 (GGVIVPFIGIKVIDMIVGLFI).

It belongs to the cation transport ATPase (P-type) (TC 3.A.3) family. Type IA subfamily. In terms of assembly, the system is composed of three essential subunits: KdpA, KdpB and KdpC.

It is found in the cell membrane. It catalyses the reaction K(+)(out) + ATP + H2O = K(+)(in) + ADP + phosphate + H(+). Part of the high-affinity ATP-driven potassium transport (or Kdp) system, which catalyzes the hydrolysis of ATP coupled with the electrogenic transport of potassium into the cytoplasm. This subunit is responsible for energy coupling to the transport system and for the release of the potassium ions to the cytoplasm. The protein is Potassium-transporting ATPase ATP-binding subunit of Bacillus mycoides (strain KBAB4) (Bacillus weihenstephanensis).